Here is a 364-residue protein sequence, read N- to C-terminus: MACSLSFSSSVSTFHLPTTTQSTQAPPNNATTLPTTNPIQCANLRELRDRIGSVKNTQKITEAMKLVAAAKVRRAQEAVVNGRPFSETLVEVLYNMNEQLQTEDVDVPLTKIRTVKKVALMVVTGDRGLCGGFNNMLLKKAESRIAELKKLGVDYTIISIGKKGNTYFIRRPEIPVDRYFDGTNLPTAKEAQAIADDVFSLFVSEEVDKVEMLYTKFVSLVKSDPVIHTLLPLSPKGEICDINGKCVDAAEDELFRLTTKEGKLTVERDMIKTETPAFSPILEFEQDPAQILDALLPLYLNSQILRALQESLASELAARMTAMSNATDNANELKKTLSINYNRARQAKITGEILEIVAGANACV.

A chloroplast-targeting transit peptide spans 1-41; that stretch reads MACSLSFSSSVSTFHLPTTTQSTQAPPNNATTLPTTNPIQC. The tract at residues 17–36 is disordered; the sequence is PTTTQSTQAPPNNATTLPTT. Low complexity predominate over residues 25-36; sequence APPNNATTLPTT. Cysteine 130 is a catalytic residue. Cysteine 240 and cysteine 246 form a disulfide bridge.

Belongs to the ATPase gamma chain family. In terms of assembly, F-type ATPases have 2 components, CF(1) - the catalytic core - and CF(0) - the membrane proton channel. CF(1) has five subunits: alpha(3), beta(3), gamma(1), delta(1), epsilon(1). CF(0) has four main subunits: a, b, b' and c. In terms of processing, disulfide bond; Cys-240 and Cys-246 are known to form a disulfide bridge in the dark which gives rise to an inactive enzyme. Activation can be brought about by a ferredoxin-dependent reduction of the disulfide bond in the light.

The protein resides in the plastid. Its subcellular location is the chloroplast thylakoid membrane. Functionally, produces ATP from ADP in the presence of a proton gradient across the membrane. The gamma chain is believed to be important in regulating ATPase activity and the flow of protons through the CF(0) complex. The sequence is that of ATP synthase gamma chain, chloroplastic (ATPC) from Spinacia oleracea (Spinach).